Consider the following 541-residue polypeptide: Membrane protein insertase YidC (541 aa).

Transmembrane regions (helical) follow at residues 7–27, 345–365, 415–435, 453–473, and 492–512; these read LLFM…QVDY, LVQN…AVLY, LGGC…YWTF, LSAQ…MFLL, and FMPL…VLYW.

This sequence belongs to the OXA1/ALB3/YidC family. Type 1 subfamily. As to quaternary structure, interacts with the Sec translocase complex via SecD. Specifically interacts with transmembrane segments of nascent integral membrane proteins during membrane integration.

The protein localises to the cell inner membrane. Its function is as follows. Required for the insertion and/or proper folding and/or complex formation of integral membrane proteins into the membrane. Involved in integration of membrane proteins that insert both dependently and independently of the Sec translocase complex, as well as at least some lipoproteins. Aids folding of multispanning membrane proteins. This Histophilus somni (strain 2336) (Haemophilus somnus) protein is Membrane protein insertase YidC.